The following is a 329-amino-acid chain: Beta-ketoacyl-[acyl-carrier-protein] synthase III (329 aa).

Catalysis depends on residues Cys123 and His256. Positions 257 to 261 (QANIR) are ACP-binding. The active site involves Asn286.

It belongs to the thiolase-like superfamily. FabH family. In terms of assembly, homodimer.

Its subcellular location is the cytoplasm. It catalyses the reaction malonyl-[ACP] + acetyl-CoA + H(+) = 3-oxobutanoyl-[ACP] + CO2 + CoA. It participates in lipid metabolism; fatty acid biosynthesis. In terms of biological role, catalyzes the condensation reaction of fatty acid synthesis by the addition to an acyl acceptor of two carbons from malonyl-ACP. Catalyzes the first condensation reaction which initiates fatty acid synthesis and may therefore play a role in governing the total rate of fatty acid production. Possesses both acetoacetyl-ACP synthase and acetyl transacylase activities. Its substrate specificity determines the biosynthesis of branched-chain and/or straight-chain of fatty acids. The chain is Beta-ketoacyl-[acyl-carrier-protein] synthase III from Burkholderia orbicola (strain AU 1054).